Here is a 145-residue protein sequence, read N- to C-terminus: Aspartate 1-decarboxylase (145 aa).

S25 (schiff-base intermediate with substrate; via pyruvic acid) is an active-site residue. Position 25 is a pyruvic acid (Ser) (S25). Residue T57 coordinates substrate. Y58 (proton donor) is an active-site residue. Residue 73–75 (GAA) participates in substrate binding.

The protein belongs to the PanD family. In terms of assembly, heterooctamer of four alpha and four beta subunits. It depends on pyruvate as a cofactor. In terms of processing, is synthesized initially as an inactive proenzyme, which is activated by self-cleavage at a specific serine bond to produce a beta-subunit with a hydroxyl group at its C-terminus and an alpha-subunit with a pyruvoyl group at its N-terminus.

The protein resides in the cytoplasm. The enzyme catalyses L-aspartate + H(+) = beta-alanine + CO2. Its pathway is cofactor biosynthesis; (R)-pantothenate biosynthesis; beta-alanine from L-aspartate: step 1/1. Functionally, catalyzes the pyruvoyl-dependent decarboxylation of aspartate to produce beta-alanine. This is Aspartate 1-decarboxylase from Micrococcus luteus (strain ATCC 4698 / DSM 20030 / JCM 1464 / CCM 169 / CCUG 5858 / IAM 1056 / NBRC 3333 / NCIMB 9278 / NCTC 2665 / VKM Ac-2230) (Micrococcus lysodeikticus).